Here is a 189-residue protein sequence, read N- to C-terminus: GMP synthase [glutamine-hydrolyzing] subunit A (189 aa).

The region spanning 5–189 is the Glutamine amidotransferase type-1 domain; it reads KILVVNNYGQ…MNFFEVCDLY (185 aa). Residue cysteine 79 is the Nucleophile of the active site. Residues histidine 166 and glutamate 168 contribute to the active site.

Heterodimer composed of a glutamine amidotransferase subunit (A) and a GMP-binding subunit (B).

It carries out the reaction XMP + L-glutamine + ATP + H2O = GMP + L-glutamate + AMP + diphosphate + 2 H(+). It functions in the pathway purine metabolism; GMP biosynthesis; GMP from XMP (L-Gln route): step 1/1. Functionally, catalyzes the synthesis of GMP from XMP. This is GMP synthase [glutamine-hydrolyzing] subunit A from Methanosarcina mazei (strain ATCC BAA-159 / DSM 3647 / Goe1 / Go1 / JCM 11833 / OCM 88) (Methanosarcina frisia).